A 63-amino-acid chain; its full sequence is Trypsin inhibitor 5 (63 aa).

The first 21 residues, Met-1–Gly-21, serve as a signal peptide directing secretion. Residues Asn-22–Gly-34 constitute a propeptide that is removed on maturation. 3 disulfides stabilise this stretch: Cys-37/Cys-54, Cys-44/Cys-56, and Cys-50/Cys-62.

It belongs to the protease inhibitor I7 (squash-type serine protease inhibitor) family.

Its subcellular location is the secreted. Inhibits trypsin. This chain is Trypsin inhibitor 5, found in Luffa aegyptiaca (Sponge gourd).